The sequence spans 252 residues: Geranylgeranylglyceryl phosphate synthase (252 aa).

The Mg(2+) site is built by Asp27 and Ser56. Sn-glycerol 1-phosphate-binding positions include 175–181 (YLEAGSG), 206–207 (GG), and 228–229 (GT).

The protein belongs to the GGGP/HepGP synthase family. Group II subfamily. The cofactor is Mg(2+).

It is found in the cytoplasm. It catalyses the reaction sn-glycerol 1-phosphate + (2E,6E,10E)-geranylgeranyl diphosphate = sn-3-O-(geranylgeranyl)glycerol 1-phosphate + diphosphate. Its pathway is membrane lipid metabolism; glycerophospholipid metabolism. Functionally, prenyltransferase that catalyzes the transfer of the geranylgeranyl moiety of geranylgeranyl diphosphate (GGPP) to the C3 hydroxyl of sn-glycerol-1-phosphate (G1P). This reaction is the first ether-bond-formation step in the biosynthesis of archaeal membrane lipids. This chain is Geranylgeranylglyceryl phosphate synthase, found in Pyrococcus abyssi (strain GE5 / Orsay).